A 397-amino-acid chain; its full sequence is Formate-dependent phosphoribosylglycinamide formyltransferase (397 aa).

Residues Glu-22–Leu-23 and Glu-82 each bind N(1)-(5-phospho-beta-D-ribosyl)glycinamide. ATP-binding positions include Arg-114, Lys-155, Ser-160 to Gln-165, Glu-195 to Val-198, and Glu-203. In terms of domain architecture, ATP-grasp spans Cys-119–Leu-312. Mg(2+) contacts are provided by Glu-271 and Glu-283. N(1)-(5-phospho-beta-D-ribosyl)glycinamide contacts are provided by residues Asp-290, Lys-360, and Arg-367–Arg-368.

It belongs to the PurK/PurT family. Homodimer.

The catalysed reaction is N(1)-(5-phospho-beta-D-ribosyl)glycinamide + formate + ATP = N(2)-formyl-N(1)-(5-phospho-beta-D-ribosyl)glycinamide + ADP + phosphate + H(+). Its pathway is purine metabolism; IMP biosynthesis via de novo pathway; N(2)-formyl-N(1)-(5-phospho-D-ribosyl)glycinamide from N(1)-(5-phospho-D-ribosyl)glycinamide (formate route): step 1/1. Functionally, involved in the de novo purine biosynthesis. Catalyzes the transfer of formate to 5-phospho-ribosyl-glycinamide (GAR), producing 5-phospho-ribosyl-N-formylglycinamide (FGAR). Formate is provided by PurU via hydrolysis of 10-formyl-tetrahydrofolate. The protein is Formate-dependent phosphoribosylglycinamide formyltransferase of Alcanivorax borkumensis (strain ATCC 700651 / DSM 11573 / NCIMB 13689 / SK2).